The following is a 226-amino-acid chain: Thiamine-phosphate synthase (226 aa).

Residues 46-50 (QFRDK) and Asp-83 contribute to the 4-amino-2-methyl-5-(diphosphooxymethyl)pyrimidine site. Residues Asp-84 and Asp-103 each contribute to the Mg(2+) site. Ser-122 is a 4-amino-2-methyl-5-(diphosphooxymethyl)pyrimidine binding site. 149-151 (TQS) serves as a coordination point for 2-[(2R,5Z)-2-carboxy-4-methylthiazol-5(2H)-ylidene]ethyl phosphate. Lys-152 provides a ligand contact to 4-amino-2-methyl-5-(diphosphooxymethyl)pyrimidine. 2-[(2R,5Z)-2-carboxy-4-methylthiazol-5(2H)-ylidene]ethyl phosphate-binding positions include Gly-181 and 201–202 (IT).

Belongs to the thiamine-phosphate synthase family. Mg(2+) serves as cofactor.

The catalysed reaction is 2-[(2R,5Z)-2-carboxy-4-methylthiazol-5(2H)-ylidene]ethyl phosphate + 4-amino-2-methyl-5-(diphosphooxymethyl)pyrimidine + 2 H(+) = thiamine phosphate + CO2 + diphosphate. The enzyme catalyses 2-(2-carboxy-4-methylthiazol-5-yl)ethyl phosphate + 4-amino-2-methyl-5-(diphosphooxymethyl)pyrimidine + 2 H(+) = thiamine phosphate + CO2 + diphosphate. It catalyses the reaction 4-methyl-5-(2-phosphooxyethyl)-thiazole + 4-amino-2-methyl-5-(diphosphooxymethyl)pyrimidine + H(+) = thiamine phosphate + diphosphate. It functions in the pathway cofactor biosynthesis; thiamine diphosphate biosynthesis; thiamine phosphate from 4-amino-2-methyl-5-diphosphomethylpyrimidine and 4-methyl-5-(2-phosphoethyl)-thiazole: step 1/1. Functionally, condenses 4-methyl-5-(beta-hydroxyethyl)thiazole monophosphate (THZ-P) and 2-methyl-4-amino-5-hydroxymethyl pyrimidine pyrophosphate (HMP-PP) to form thiamine monophosphate (TMP). The polypeptide is Thiamine-phosphate synthase (Haemophilus influenzae (strain PittGG)).